The sequence spans 387 residues: 3-ketoacyl-CoA thiolase (387 aa).

The active-site Acyl-thioester intermediate is the Cys91. Catalysis depends on proton acceptor residues His343 and Cys373.

Belongs to the thiolase-like superfamily. Thiolase family. As to quaternary structure, heterotetramer of two alpha chains (FadB) and two beta chains (FadA).

Its subcellular location is the cytoplasm. It carries out the reaction an acyl-CoA + acetyl-CoA = a 3-oxoacyl-CoA + CoA. The protein operates within lipid metabolism; fatty acid beta-oxidation. Its function is as follows. Catalyzes the final step of fatty acid oxidation in which acetyl-CoA is released and the CoA ester of a fatty acid two carbons shorter is formed. This Idiomarina loihiensis (strain ATCC BAA-735 / DSM 15497 / L2-TR) protein is 3-ketoacyl-CoA thiolase.